Reading from the N-terminus, the 638-residue chain is Chaperone protein DnaK (638 aa).

Thr198 carries the post-translational modification Phosphothreonine; by autocatalysis. The disordered stretch occupies residues 599 to 638 (IYESQQAEGGAEGGPSGHHDDGIVDADYEEVKDDNTKKSA). A compositionally biased stretch (acidic residues) spans 621–630 (IVDADYEEVK).

Belongs to the heat shock protein 70 family.

Its function is as follows. Acts as a chaperone. In Allorhizobium ampelinum (strain ATCC BAA-846 / DSM 112012 / S4) (Agrobacterium vitis (strain S4)), this protein is Chaperone protein DnaK.